A 527-amino-acid chain; its full sequence is Chorismate synthase (527 aa).

Residues His-17, His-104, and Asp-485 contribute to the active site.

It belongs to the chorismate synthase family.

The protein resides in the cytoplasm. Its subcellular location is the cytosol. It catalyses the reaction 5-O-(1-carboxyvinyl)-3-phosphoshikimate = chorismate + phosphate. The catalysed reaction is FMNH2 + NADP(+) = FMN + NADPH + 2 H(+). It functions in the pathway metabolic intermediate biosynthesis; chorismate biosynthesis; chorismate from D-erythrose 4-phosphate and phosphoenolpyruvate: step 7/7. Its function is as follows. Bifunctional chorismate synthase and flavin reductase. Catalyzes the conversion of 5-enolpyruvylshikimate 3-phosphate (EPSP) to form chorismate. Acts also as a flavin reductase (FR) able to generate reduced flavin mononucleotide in the presence of NADPH. This is Chorismate synthase from Plasmodium falciparum (isolate 3D7).